A 326-amino-acid polypeptide reads, in one-letter code: MLKTYHIALACVILAVVVLLFGGESLSLEEWQEVCLNVKNHFLHNEELSSLSIIILEIRLPRVILALLVGASLSGSGVVMQTIFRNPLVDPFLLGISSGAMLGVAMAIAVVESNIAILAFFGAILASLAVLAMNRVLGNSVLSLVLSGVVLSAFLSALAGAIKFFVIPQKAQAIVVWLLGSLSLSSYKDCLIAFIGLSLGFIPLFLLRWRINLLSLSDAQSLSLGINPVLLRSLCLVCVSVASALAVSVSGTIGWIGLVIPHVARLFFGANLQKLLLSSLLMGAFFLLLADVVAKTITPYDLPVGIATSVLGAPFFLWLLFRTRGV.

10 helical membrane passes run 7–27, 64–84, 91–111, 113–133, 142–162, 164–184, 187–207, 241–261, 275–295, and 301–321; these read IALA…ESLS, ILAL…QTIF, PFLL…IAVV, SNIA…VLAM, LSLV…AGAI, FFVI…SLSL, YKDC…LFLL, VASA…LVIP, LLLS…VVAK, and DLPV…WLLF.

It belongs to the binding-protein-dependent transport system permease family. FecCD subfamily.

The protein resides in the cell inner membrane. Its function is as follows. Part of a binding-protein-dependent transport system for an iron chelatin; probably responsible for the translocation of the substrate across the membrane. This chain is Probable iron chelatin transport system permease protein HP_0889, found in Helicobacter pylori (strain ATCC 700392 / 26695) (Campylobacter pylori).